We begin with the raw amino-acid sequence, 103 residues long: Small ribosomal subunit protein uS10 (103 aa).

Belongs to the universal ribosomal protein uS10 family. As to quaternary structure, part of the 30S ribosomal subunit.

Functionally, involved in the binding of tRNA to the ribosomes. This is Small ribosomal subunit protein uS10 from Shewanella baltica (strain OS223).